Reading from the N-terminus, the 146-residue chain is 3-dehydroquinate dehydratase (146 aa).

Catalysis depends on Y24, which acts as the Proton acceptor. Substrate contacts are provided by N73, H79, and D86. H99 serves as the catalytic Proton donor. Substrate-binding positions include 100-101 and R110; that span reads LS.

The protein belongs to the type-II 3-dehydroquinase family. As to quaternary structure, homododecamer.

It carries out the reaction 3-dehydroquinate = 3-dehydroshikimate + H2O. The protein operates within metabolic intermediate biosynthesis; chorismate biosynthesis; chorismate from D-erythrose 4-phosphate and phosphoenolpyruvate: step 3/7. In terms of biological role, catalyzes a trans-dehydration via an enolate intermediate. In Shewanella baltica (strain OS195), this protein is 3-dehydroquinate dehydratase.